Consider the following 179-residue polypeptide: Alkyl hydroperoxide reductase AhpD (179 aa).

Cys-130 serves as the catalytic Proton donor. A disulfide bridge connects residues Cys-130 and Cys-133. Residue Cys-133 is the Cysteine sulfenic acid (-SOH) intermediate of the active site.

The protein belongs to the AhpD family. In terms of assembly, homotrimer.

The catalysed reaction is N(6)-[(R)-dihydrolipoyl]-L-lysyl-[lipoyl-carrier protein] + a hydroperoxide = N(6)-[(R)-lipoyl]-L-lysyl-[lipoyl-carrier protein] + an alcohol + H2O. Antioxidant protein with alkyl hydroperoxidase activity. Required for the reduction of the AhpC active site cysteine residues and for the regeneration of the AhpC enzyme activity. The polypeptide is Alkyl hydroperoxide reductase AhpD (Rhodococcus erythropolis (strain PR4 / NBRC 100887)).